We begin with the raw amino-acid sequence, 130 residues long: Guanylate kinase (130 aa).

In terms of domain architecture, Guanylate kinase-like spans 1-130 (KIFEDPTTSY…EKIQSRVNEA (130 aa)).

Belongs to the guanylate kinase family.

It is found in the cytoplasm. The catalysed reaction is GMP + ATP = GDP + ADP. In terms of biological role, essential for recycling GMP and indirectly, cGMP. The chain is Guanylate kinase (gmk) from Staphylococcus epidermidis.